The chain runs to 42 residues: Photosystem II reaction center protein J (42 aa).

A helical transmembrane segment spans residues 10-30; the sequence is IPLWLVGTVAGTAAIGLLGIF.

This sequence belongs to the PsbJ family. PSII is composed of 1 copy each of membrane proteins PsbA, PsbB, PsbC, PsbD, PsbE, PsbF, PsbH, PsbI, PsbJ, PsbK, PsbL, PsbM, PsbT, PsbX, PsbY, PsbZ, Psb30/Ycf12, at least 3 peripheral proteins of the oxygen-evolving complex and a large number of cofactors. It forms dimeric complexes.

The protein resides in the plastid. It localises to the chloroplast thylakoid membrane. Functionally, one of the components of the core complex of photosystem II (PSII). PSII is a light-driven water:plastoquinone oxidoreductase that uses light energy to abstract electrons from H(2)O, generating O(2) and a proton gradient subsequently used for ATP formation. It consists of a core antenna complex that captures photons, and an electron transfer chain that converts photonic excitation into a charge separation. The protein is Photosystem II reaction center protein J of Pleurastrum terricola (Filamentous green alga).